We begin with the raw amino-acid sequence, 235 residues long: Iron-sulfur cluster co-chaperone protein HscB (235 aa).

Cys-41, Cys-44, Cys-58, and Cys-61 together coordinate a divalent metal cation. A J domain is found at 72–144 (DYFSLMDCNR…LSRGLYLLKL (73 aa)).

The protein belongs to the HscB family. As to quaternary structure, interacts with ISCU and HSPA9 to form an iron-sulfur transfer complex. Interacts with SDHAF1 (via the first LYR motif); the interaction recruits the iron-sulfur transfer complex composed of HSC20, HSPA9 and ISCU and mediates the incorporation of iron-sulfur clusters into SDHB which also interacts with HSC20. Interacts with the cytoplasmic form of ISCU and with CIA complex member CIAO1 (via LYR motif). Homodimer. Interacts with ISCU (cytoplasmic form); this interaction stabilizes the (Fe-S) clusters on ISCU. Interacts with the CIA complex member CIAO1 (via LYR motif). Expressed in lung, brain, stomach, spleen, ovary, testis, liver, muscle and heart.

Its subcellular location is the cytoplasm. The protein resides in the mitochondrion. The protein operates within cofactor biosynthesis; iron-sulfur cluster biosynthesis. Its function is as follows. Acts as a co-chaperone in iron-sulfur cluster assembly in mitochondria. Required for incorporation of iron-sulfur clusters into SDHB, the iron-sulfur protein subunit of succinate dehydrogenase that is involved in complex II of the mitochondrial electron transport chain. Recruited to SDHB by interaction with SDHAF1 which first binds SDHB and then recruits the iron-sulfur transfer complex formed by HSC20, HSPA9 and ISCU through direct binding to HSC20. Plays an essential role in hematopoiesis. Functionally, acts as a co-chaperone in iron-sulfur cluster assembly in the cytoplasm. Also mediates complex formation between components of the cytosolic iron-sulfur biogenesis pathway and the CIA targeting complex composed of CIAO1, DIPK1B/FAM69B and MMS19 by binding directly to the scaffold protein ISCU and to CIAO1. This facilitates iron-sulfur cluster insertion into a number of cytoplasmic and nuclear proteins including POLD1, ELP3, DPYD and PPAT. This is Iron-sulfur cluster co-chaperone protein HscB from Homo sapiens (Human).